The following is a 263-amino-acid chain: uncharacterized protein (263 aa).

Residue 31–38 (GPTGSGKT) participates in ATP binding.

The protein belongs to the CbbQ/NirQ/NorQ/GpvN family.

This is an uncharacterized protein from Staphylococcus epidermidis (strain ATCC 12228 / FDA PCI 1200).